Reading from the N-terminus, the 563-residue chain is Pyruvate decarboxylase isozyme 1 (563 aa).

Serine 2 bears the N-acetylserine mark. 3 residues coordinate pyruvate: aspartate 28, histidine 115, and tyrosine 157. Omega-N-methylarginine is present on arginine 161. Lysine 212 is covalently cross-linked (Glycyl lysine isopeptide (Lys-Gly) (interchain with G-Cter in ubiquitin)). Serine 223 is modified (phosphoserine). Arginine 224 contacts pyruvate. A Glycyl lysine isopeptide (Lys-Gly) (interchain with G-Cter in ubiquitin) cross-link involves residue lysine 233. Position 266 is a phosphothreonine (threonine 266). Glycyl lysine isopeptide (Lys-Gly) (interchain with G-Cter in ubiquitin) cross-links involve residues lysine 269 and lysine 332. A phosphothreonine mark is found at threonine 336 and threonine 353. Residues threonine 390 and 413–415 each bind thiamine diphosphate; that span reads GSI. Aspartate 444 is a Mg(2+) binding site. Thiamine diphosphate contacts are provided by residues 445–446 and 471–476; these read GS and NDGYTI. Mg(2+)-binding residues include asparagine 471 and glycine 473. Glutamate 477 contributes to the pyruvate binding site. Residues lysine 484, lysine 505, and lysine 520 each participate in a glycyl lysine isopeptide (Lys-Gly) (interchain with G-Cter in ubiquitin) cross-link. The residue at position 522 (threonine 522) is a Phosphothreonine. A Phosphoserine modification is found at serine 526.

The protein belongs to the TPP enzyme family. Homotetramer. Mg(2+) serves as cofactor. Thiamine diphosphate is required as a cofactor. In terms of processing, cleavage of N-terminal methionine and N-terminal acetylation by NAT1/ARD1.

It localises to the cytoplasm. It is found in the nucleus. The enzyme catalyses pyruvate + H(+) = acetaldehyde + CO2. The catalysed reaction is 3-methyl-2-oxobutanoate + H(+) = 2-methylpropanal + CO2. It carries out the reaction (S)-3-methyl-2-oxopentanoate + H(+) = 2-methylbutanal + CO2. It catalyses the reaction indole-3-pyruvate + H(+) = indole-3-acetaldehyde + CO2. The enzyme catalyses 3-phenylpyruvate + H(+) = 2-phenylacetaldehyde + CO2. The catalysed reaction is 2-oxobutanoate + H(+) = propanal + CO2. It carries out the reaction 2-oxopentanoate + H(+) = butanal + CO2. It catalyses the reaction 2 acetaldehyde = acetoin. The enzyme catalyses acetaldehyde + pyruvate + H(+) = acetoin + CO2. It functions in the pathway fermentation; ethanol fermentation. It participates in amino-acid degradation; Ehrlich pathway. Allosterically activated by its substrate, pyruvate. Major of three pyruvate decarboxylases (PDC1, PDC5, PDC6) implicated in the nonoxidative conversion of pyruvate to acetaldehyde and carbon dioxide during alcoholic fermentation. Most of the produced acetaldehyde is subsequently reduced to ethanol, but some is required for cytosolic acetyl-CoA production for biosynthetic pathways. The enzyme is also one of five 2-oxo acid decarboxylases (PDC1, PDC5, PDC6, ARO10, and THI3) able to decarboxylate more complex 2-oxo acids (alpha-ketoacids) than pyruvate, which seem mainly involved in amino acid catabolism. Here the enzyme catalyzes the decarboxylation of amino acids, which, in a first step, have been transaminated to the corresponding 2-oxo acids. In a third step, the resulting aldehydes are reduced to alcohols, collectively referred to as fusel oils or alcohols. Its preferred substrates are the transaminated amino acids derived from threonine (2-oxobutanoate), norvaline (2-oxopentanoate), valine (3-methyl-2-oxobutanoate, also alpha-keto-isovalerate), isoleucine ((3S)-3-methyl-2-oxopentanoate, also alpha-keto-beta-methylvalerate), phenylalanine (phenylpyruvate), and tryptophan (3-(indol-3-yl)pyruvate), whereas transaminated leucine is no substrate. In a side-reaction the carbanionic intermediate (or active aldehyde) generated by decarboxylation or by activation of an aldehyde can react with an aldehyde via condensation (or carboligation) yielding a 2-hydroxy ketone, collectively called acyloins. This Saccharomyces cerevisiae (strain ATCC 204508 / S288c) (Baker's yeast) protein is Pyruvate decarboxylase isozyme 1.